We begin with the raw amino-acid sequence, 335 residues long: Glycerol-3-phosphate dehydrogenase [NAD(P)+] (335 aa).

4 residues coordinate NADPH: Ser15, Tyr16, His36, and Lys110. Lys110, Gly139, and Thr141 together coordinate sn-glycerol 3-phosphate. Ala143 serves as a coordination point for NADPH. 5 residues coordinate sn-glycerol 3-phosphate: Lys195, Asp248, Ser258, Arg259, and Asn260. Lys195 functions as the Proton acceptor in the catalytic mechanism. Arg259 lines the NADPH pocket. NADPH-binding residues include Val283 and Glu285.

Belongs to the NAD-dependent glycerol-3-phosphate dehydrogenase family.

It localises to the cytoplasm. It catalyses the reaction sn-glycerol 3-phosphate + NAD(+) = dihydroxyacetone phosphate + NADH + H(+). The catalysed reaction is sn-glycerol 3-phosphate + NADP(+) = dihydroxyacetone phosphate + NADPH + H(+). It functions in the pathway membrane lipid metabolism; glycerophospholipid metabolism. Its function is as follows. Catalyzes the reduction of the glycolytic intermediate dihydroxyacetone phosphate (DHAP) to sn-glycerol 3-phosphate (G3P), the key precursor for phospholipid synthesis. In Haemophilus influenzae (strain 86-028NP), this protein is Glycerol-3-phosphate dehydrogenase [NAD(P)+].